The primary structure comprises 125 residues: Aspartate 1-decarboxylase (125 aa).

The Schiff-base intermediate with substrate; via pyruvic acid role is filled by S25. S25 bears the Pyruvic acid (Ser) mark. T57 serves as a coordination point for substrate. Y58 serves as the catalytic Proton donor. Residue 73 to 75 (GAA) coordinates substrate.

It belongs to the PanD family. Heterooctamer of four alpha and four beta subunits. The cofactor is pyruvate. In terms of processing, is synthesized initially as an inactive proenzyme, which is activated by self-cleavage at a specific serine bond to produce a beta-subunit with a hydroxyl group at its C-terminus and an alpha-subunit with a pyruvoyl group at its N-terminus.

It is found in the cytoplasm. The enzyme catalyses L-aspartate + H(+) = beta-alanine + CO2. It functions in the pathway cofactor biosynthesis; (R)-pantothenate biosynthesis; beta-alanine from L-aspartate: step 1/1. In terms of biological role, catalyzes the pyruvoyl-dependent decarboxylation of aspartate to produce beta-alanine. The polypeptide is Aspartate 1-decarboxylase (Herpetosiphon aurantiacus (strain ATCC 23779 / DSM 785 / 114-95)).